Reading from the N-terminus, the 156-residue chain is Snaclec alboaggregin-B subunit alpha (156 aa).

A signal peptide spans 1–23 (MGRFIFVSFGLLVVFLSLSGTGA). Residues 24 to 151 (DCPSDWSSFK…CEQKHIFMCK (128 aa)) form the C-type lectin domain. Cystine bridges form between C25–C36, C53–C150, and C125–C142.

The protein belongs to the snaclec family. In terms of assembly, heterodimer of subunits alpha and beta; disulfide-linked. Expressed by the venom gland.

The protein localises to the secreted. Its function is as follows. Weakly agglutinates platelets at high doses by binding to GPIbalpha (GP1BA). The chain is Snaclec alboaggregin-B subunit alpha from Trimeresurus albolabris (White-lipped pit viper).